We begin with the raw amino-acid sequence, 290 residues long: CMRF35-like molecule 1 (290 aa).

The first 19 residues, 1–19 (MPLLTLYLLLFWLSGYSIV), serve as a signal peptide directing secretion. The region spanning 20 to 126 (TQITGPTTVN…LGVTVQVTID (107 aa)) is the Ig-like V-type domain. Residues 20 to 156 (TQITGPTTVN…DNRHKLLKLS (137 aa)) lie on the Extracellular side of the membrane. 2 cysteine pairs are disulfide-bonded: Cys40–Cys108 and Cys54–Cys62. Asn88 carries an N-linked (GlcNAc...) asparagine glycan. Residues 157 to 177 (VLLPLIFTILLLLLVAASLLA) form a helical membrane-spanning segment. Residues 178 to 290 (WRMMKYQQKA…PTEYSTISRP (113 aa)) lie on the Cytoplasmic side of the membrane. The interval 267–290 (GHLSSHLPGRGPEEPTEYSTISRP) is disordered.

Belongs to the CD300 family. As to quaternary structure, interacts with PTPN6/SHP-1 in a tyrosine phosphorylation dependent manner. Interacts with IL4R. Phosphorylated on tyrosine. Highly expressed in spleen, peripheral blood leukocyte and monocyte, and lung. Weakly expressed in thymus, heart, brain, placenta, liver, skeletal muscle, kidney, pancreas, prostate, testis, ovary, small intestine or colon. Expressed selectively in monocytes and monocyte-related cells.

The protein localises to the cell membrane. Its function is as follows. Acts as an inhibitory receptor for myeloid cells and mast cells. Positively regulates the phagocytosis of apoptotic cells (efferocytosis) via phosphatidylserine (PS) recognition; recognizes and binds PS as a ligand which is expressed on the surface of apoptotic cells. Plays an important role in the maintenance of immune homeostasis, by promoting macrophage-mediated efferocytosis and by inhibiting dendritic cell-mediated efferocytosis. Negatively regulates Fc epsilon receptor-dependent mast cell activation and allergic responses via binding to ceramide and sphingomyelin which act as ligands. May act as a coreceptor for interleukin 4 (IL-4). Associates with and regulates IL-4 receptor alpha-mediated responses by augmenting IL-4- and IL-13-induced signaling. Negatively regulates the Toll-like receptor (TLR) signaling mediated by MYD88 and TRIF through activation of PTPN6/SHP-1 and PTPN11/SHP-2. Inhibits osteoclast formation. Induces macrophage cell death upon engagement. The chain is CMRF35-like molecule 1 (CD300LF) from Homo sapiens (Human).